Consider the following 404-residue polypeptide: Cytoplasmic tRNA 2-thiolation protein 2 (404 aa).

It belongs to the CTU2/NCS2 family.

The protein localises to the cytoplasm. The protein operates within tRNA modification; 5-methoxycarbonylmethyl-2-thiouridine-tRNA biosynthesis. Functionally, plays a central role in 2-thiolation of mcm(5)S(2)U at tRNA wobble positions of tRNA(Lys), tRNA(Glu) and tRNA(Gln). May act by forming a heterodimer with NCS6/CTU1 that ligates sulfur from thiocarboxylated URM1 onto the uridine of tRNAs at wobble position. The sequence is that of Cytoplasmic tRNA 2-thiolation protein 2 from Drosophila mojavensis (Fruit fly).